The chain runs to 152 residues: Methylglyoxal synthase (152 aa).

The MGS-like domain occupies 6–152; it reads RTMATAKNIA…YQHYLNGRLK (147 aa). Substrate contacts are provided by residues histidine 19, lysine 23, 45–48, and 65–66; these read TGTT and SG. Residue aspartate 71 is the Proton donor/acceptor of the active site. A substrate-binding site is contributed by histidine 98.

This sequence belongs to the methylglyoxal synthase family.

It catalyses the reaction dihydroxyacetone phosphate = methylglyoxal + phosphate. Catalyzes the formation of methylglyoxal from dihydroxyacetone phosphate. This chain is Methylglyoxal synthase, found in Photorhabdus laumondii subsp. laumondii (strain DSM 15139 / CIP 105565 / TT01) (Photorhabdus luminescens subsp. laumondii).